Consider the following 389-residue polypeptide: Na(+)/H(+) antiporter NhaA 1 (389 aa).

Helical transmembrane passes span 12–32 (VLNE…ALLV), 62–82 (FLLW…GLEL), 97–117 (IVLP…LFAL), 128–148 (GWAI…MMCG), 157–177 (IFLL…IAIF), 184–204 (IAAF…NLLG), 220–240 (ISVL…AFFI), 260–280 (FWIA…VNLS), 282–302 (IDIG…LFVG), 331–351 (LYGV…IDGL), and 365–385 (LAIL…LKFF).

It belongs to the NhaA Na(+)/H(+) (TC 2.A.33) antiporter family.

It localises to the cell inner membrane. The enzyme catalyses Na(+)(in) + 2 H(+)(out) = Na(+)(out) + 2 H(+)(in). Functionally, na(+)/H(+) antiporter that extrudes sodium in exchange for external protons. The sequence is that of Na(+)/H(+) antiporter NhaA 1 from Campylobacter jejuni subsp. jejuni serotype O:2 (strain ATCC 700819 / NCTC 11168).